Here is a 916-residue protein sequence, read N- to C-terminus: Protein translocase subunit SecA (916 aa).

ATP is bound by residues Gln-87, 105–109, and Asp-507; that span reads GEGKT. Zn(2+) contacts are provided by Cys-900, Cys-902, Cys-911, and His-912.

The protein belongs to the SecA family. In terms of assembly, monomer and homodimer. Part of the essential Sec protein translocation apparatus which comprises SecA, SecYEG and auxiliary proteins SecDF-YajC and YidC. The cofactor is Zn(2+).

Its subcellular location is the cell inner membrane. The protein localises to the cytoplasm. The enzyme catalyses ATP + H2O + cellular proteinSide 1 = ADP + phosphate + cellular proteinSide 2.. Part of the Sec protein translocase complex. Interacts with the SecYEG preprotein conducting channel. Has a central role in coupling the hydrolysis of ATP to the transfer of proteins into and across the cell membrane, serving both as a receptor for the preprotein-SecB complex and as an ATP-driven molecular motor driving the stepwise translocation of polypeptide chains across the membrane. In Neisseria meningitidis serogroup A / serotype 4A (strain DSM 15465 / Z2491), this protein is Protein translocase subunit SecA.